A 780-amino-acid chain; its full sequence is Striatin (780 aa).

The stretch at leucine 53–lysine 120 forms a coiled coil. The segment at phenylalanine 55–phenylalanine 63 is caveolin-binding. Residues threonine 123 to asparagine 150 form a disordered region. A Phosphoserine modification is found at serine 137. Residues glutamine 149–leucine 166 are calmodulin-binding. At threonine 225 the chain carries Phosphothreonine. Residues serine 227, serine 229, serine 245, and serine 259 each carry the phosphoserine modification. Disordered stretches follow at residues aspartate 289–lysine 312, glutamate 334–lysine 353, and valine 364–arginine 392. Over residues asparagine 299 to lysine 312 the composition is skewed to basic and acidic residues. The segment covering lysine 338–arginine 351 has biased composition (basic residues). WD repeat units lie at residues serine 461–lysine 500, alanine 514–tyrosine 553, glycine 567–serine 606, serine 662–serine 701, alanine 704–glutamate 743, and lysine 750–valine 780.

Belongs to the WD repeat striatin family. As to quaternary structure, part of the core of STRIPAK complexes composed of PP2A catalytic and scaffolding subunits, the striatins (PP2A regulatory subunits), the striatin-associated proteins MOB4, STRIP1 and STRIP2, PDCD10 and members of the STE20 kinases, such as STK24 and STK26. Interacts with CTTNBP2; this interaction may regulate dendritic spine distribution of STRN. Activation of glutamate receptors weakens the interaction with CTTNBP2. As to expression, mainly expressed in brain but is also expressed at low levels in various tissues such as kidney, spleen, skeletal muscle and lung.

The protein resides in the cytoplasm. It localises to the membrane. It is found in the cell projection. Its subcellular location is the dendritic spine. Functionally, calmodulin-binding scaffolding protein which is the center of the striatin-interacting phosphatase and kinase (STRIPAK) complexes. STRIPAK complexes have critical roles in protein (de)phosphorylation and are regulators of multiple signaling pathways including Hippo, MAPK, nuclear receptor and cytoskeleton remodeling. Different types of STRIPAK complexes are involved in a variety of biological processes such as cell growth, differentiation, apoptosis, metabolism and immune regulation. The sequence is that of Striatin (Strn) from Mus musculus (Mouse).